Here is a 245-residue protein sequence, read N- to C-terminus: MYPVDLHMHTVASTHAYSTLSDYIAQAKQKGIKLFAITDHGPDMEDAPHHWHFINMRIWPRVVDGVGILRGIEANIKNVDGEIDCSGKMFDSLDLIIAGFHEPVFAPHDKATNTQAMIATIASGNVHIISHPGNPKYEIDVKAVAEAAAKHQVALEINNSSFLHSRKGSEDNCREVAAAVRDAGGWVALGSDSHTAFTMGEFEECLKILDAVDFPPERILNVSPRRLLNFLESRGMAPIAEFADL.

Zn(2+) contacts are provided by His-7, His-9, His-15, His-40, Glu-73, His-101, His-131, Asp-192, and His-194.

Belongs to the PHP family. In terms of assembly, homotrimer. Zn(2+) is required as a cofactor.

The chain is Probable phosphatase YcdX from Escherichia coli (strain K12 / MC4100 / BW2952).